The following is a 185-amino-acid chain: Ribosome-recycling factor (185 aa).

It belongs to the RRF family.

Its subcellular location is the cytoplasm. In terms of biological role, responsible for the release of ribosomes from messenger RNA at the termination of protein biosynthesis. May increase the efficiency of translation by recycling ribosomes from one round of translation to another. This is Ribosome-recycling factor from Syntrophobacter fumaroxidans (strain DSM 10017 / MPOB).